The primary structure comprises 1116 residues: Ubiquitin C-terminal hydrolase 12 (1116 aa).

The span at 1–10 (MTMMTPPPVD) shows a compositional bias: pro residues. The interval 1–52 (MTMMTPPPVDQPEDEEMLVPNSDLVDGPAQPMEVTQPETAASTVENQPAEDP) is disordered. The segment covering 36-46 (QPETAASTVEN) has biased composition (polar residues). One can recognise an MATH domain in the interval 54–179 (TLKFTWTIPN…NDTVLVEAEV (126 aa)). The region spanning 199–524 (VGLKNQGATC…NAYMLVYIRE (326 aa)) is the USP domain. C208 acts as the Nucleophile in catalysis. H455 (proton acceptor) is an active-site residue.

This sequence belongs to the peptidase C19 family. Interacts with SIC/RON3.

It catalyses the reaction Thiol-dependent hydrolysis of ester, thioester, amide, peptide and isopeptide bonds formed by the C-terminal Gly of ubiquitin (a 76-residue protein attached to proteins as an intracellular targeting signal).. Recognizes and hydrolyzes the peptide bond at the C-terminal Gly of ubiquitin. Involved in the processing of poly-ubiquitin precursors as well as that of ubiquitinated proteins. Positive regulator of root meristem development that, together with UBP13, prevents the ubiquitination and turnover of RGFR1 induced by the RGF1 hormone peptide, thus influencing PLT1 and PLT2 expression. The polypeptide is Ubiquitin C-terminal hydrolase 12 (Arabidopsis thaliana (Mouse-ear cress)).